Here is a 186-residue protein sequence, read N- to C-terminus: MSRSKEVSPNLSQQKRGDVRSAGISGFSSPIYRGRLNHSASAELQEGYRILTGGQKANIISDKDLFKAIHSCGLHTSEEEVNDLLRVVHQDERTLGLEFPEFMMLMTKGIDEASIAEMRRPFSVLDKAKTGVITKKQFTELFVSSGEHSSAEELEELMLLAETSEELEVVDYNKLINELAILLNKM.

Positions 1 to 23 (MSRSKEVSPNLSQQKRGDVRSAG) are disordered. EF-hand domains lie at 41-76 (SAEL…GLHT), 77-112 (SEEE…GIDE), 113-148 (ASIA…SGEH), and 149-186 (SSAE…LNKM). 3 residues coordinate Ca(2+): Glu98, Asp126, and Thr130.

The sequence is that of EF-hand protein 5 from Leishmania tarentolae (Sauroleishmania tarentolae).